Reading from the N-terminus, the 62-residue chain is Large ribosomal subunit protein uL30 (62 aa).

The protein belongs to the universal ribosomal protein uL30 family. As to quaternary structure, part of the 50S ribosomal subunit.

The protein is Large ribosomal subunit protein uL30 of Dinoroseobacter shibae (strain DSM 16493 / NCIMB 14021 / DFL 12).